We begin with the raw amino-acid sequence, 451 residues long: UDP-N-acetylmuramate--L-alanine ligase (451 aa).

Gly110–Thr116 is a binding site for ATP.

This sequence belongs to the MurCDEF family.

Its subcellular location is the cytoplasm. It catalyses the reaction UDP-N-acetyl-alpha-D-muramate + L-alanine + ATP = UDP-N-acetyl-alpha-D-muramoyl-L-alanine + ADP + phosphate + H(+). It participates in cell wall biogenesis; peptidoglycan biosynthesis. Functionally, cell wall formation. In Francisella tularensis subsp. holarctica (strain FTNF002-00 / FTA), this protein is UDP-N-acetylmuramate--L-alanine ligase.